The following is a 283-amino-acid chain: tRNA-cytidine(32) 2-sulfurtransferase (283 aa).

The PP-loop motif signature appears at 32–37; that stretch reads SGGKDS. 3 residues coordinate [4Fe-4S] cluster: Cys-107, Cys-110, and Cys-198.

This sequence belongs to the TtcA family. As to quaternary structure, homodimer. Mg(2+) serves as cofactor. It depends on [4Fe-4S] cluster as a cofactor.

It localises to the cytoplasm. The catalysed reaction is cytidine(32) in tRNA + S-sulfanyl-L-cysteinyl-[cysteine desulfurase] + AH2 + ATP = 2-thiocytidine(32) in tRNA + L-cysteinyl-[cysteine desulfurase] + A + AMP + diphosphate + H(+). The protein operates within tRNA modification. Catalyzes the ATP-dependent 2-thiolation of cytidine in position 32 of tRNA, to form 2-thiocytidine (s(2)C32). The sulfur atoms are provided by the cysteine/cysteine desulfurase (IscS) system. The polypeptide is tRNA-cytidine(32) 2-sulfurtransferase (Sorangium cellulosum (strain So ce56) (Polyangium cellulosum (strain So ce56))).